The primary structure comprises 246 residues: E3 ubiquitin-protein ligase MARCHF2 (246 aa).

The RING-CH-type zinc-finger motif lies at D56–E116. Residues C64, C67, C80, C82, H90, C93, C106, and C109 each contribute to the Zn(2+) site. Residues P121–V246 are required for interaction with IKBKG. The next 2 membrane-spanning stretches (helical) occupy residues L138–L158 and A175–V195.

In terms of assembly, interacts with STX6; the interaction promotes MARCHF2-mediated ubiquitination and degradation of CFTR. Interacts with MARCHF3. Interacts with GOPC/CAL; the interaction leads to CFTR ubiquitination and degradation. Interacts with CFTR; the interaction leads to CFTR ubiqtuitination and degradation. Interacts (via PDZ domain) with DLG1 (via PDZ domains); the interaction leads to DLG1 ubiqtuitination and degradation. Interacts with ERGIC3. Interacts with ADRB2. Interacts with IKBKG/NEMO; during the late stages of macrophage viral and bacterial infection; the interaction leads to ubiquitination and degradation of IKBKG/NEMO. In terms of tissue distribution, ubiquitously expressed. Present in liver (at protein level).

The protein resides in the endoplasmic reticulum membrane. The protein localises to the lysosome membrane. It is found in the endosome membrane. It localises to the golgi apparatus membrane. Its subcellular location is the cytoplasm. The protein resides in the cell membrane. It catalyses the reaction S-ubiquitinyl-[E2 ubiquitin-conjugating enzyme]-L-cysteine + [acceptor protein]-L-lysine = [E2 ubiquitin-conjugating enzyme]-L-cysteine + N(6)-ubiquitinyl-[acceptor protein]-L-lysine.. It participates in protein modification; protein ubiquitination. Its function is as follows. E3 ubiquitin-protein ligase that may mediate ubiquitination of TFRC and CD86, and promote their subsequent endocytosis and sorting to lysosomes via multivesicular bodies. E3 ubiquitin ligases accept ubiquitin from an E2 ubiquitin-conjugating enzyme in the form of a thioester and then directly transfer the ubiquitin to targeted substrates. Together with GOPC/CAL mediates the ubiquitination and lysosomal degradation of CFTR. Ubiquitinates and therefore mediates the degradation of DLG1. Regulates the intracellular trafficking and secretion of alpha1-antitrypsin/SERPINA1 and HP/haptoglobin via ubiquitination and degradation of the cargo receptor ERGIC3. Negatively regulates the antiviral and antibacterial immune response by repression of the NF-kB and type 1 IFN signaling pathways, via MARCHF2-mediated K48-linked polyubiquitination of IKBKG/NEMO, resulting in its proteasomal degradation. May be involved in endosomal trafficking through interaction with STX6. The sequence is that of E3 ubiquitin-protein ligase MARCHF2 (Marchf2) from Rattus norvegicus (Rat).